The sequence spans 185 residues: Elongation factor P (185 aa).

This sequence belongs to the elongation factor P family.

It is found in the cytoplasm. It functions in the pathway protein biosynthesis; polypeptide chain elongation. Functionally, involved in peptide bond synthesis. Stimulates efficient translation and peptide-bond synthesis on native or reconstituted 70S ribosomes in vitro. Probably functions indirectly by altering the affinity of the ribosome for aminoacyl-tRNA, thus increasing their reactivity as acceptors for peptidyl transferase. The polypeptide is Elongation factor P (Symbiobacterium thermophilum (strain DSM 24528 / JCM 14929 / IAM 14863 / T)).